A 340-amino-acid chain; its full sequence is N-acetyl-gamma-glutamyl-phosphate reductase (340 aa).

Residue Cys146 is part of the active site.

This sequence belongs to the NAGSA dehydrogenase family. Type 1 subfamily.

It is found in the cytoplasm. It carries out the reaction N-acetyl-L-glutamate 5-semialdehyde + phosphate + NADP(+) = N-acetyl-L-glutamyl 5-phosphate + NADPH + H(+). The protein operates within amino-acid biosynthesis; L-arginine biosynthesis; N(2)-acetyl-L-ornithine from L-glutamate: step 3/4. Catalyzes the NADPH-dependent reduction of N-acetyl-5-glutamyl phosphate to yield N-acetyl-L-glutamate 5-semialdehyde. This chain is N-acetyl-gamma-glutamyl-phosphate reductase, found in Rubrobacter xylanophilus (strain DSM 9941 / JCM 11954 / NBRC 16129 / PRD-1).